The primary structure comprises 92 residues: Acylphosphatase (92 aa).

Residues 3–92 (TKHVLVSGIV…GPRSTHFEVT (90 aa)) form the Acylphosphatase-like domain. Active-site residues include Arg18 and Asn36.

The protein belongs to the acylphosphatase family.

The enzyme catalyses an acyl phosphate + H2O = a carboxylate + phosphate + H(+). This chain is Acylphosphatase (acyP), found in Alcanivorax borkumensis (strain ATCC 700651 / DSM 11573 / NCIMB 13689 / SK2).